A 245-amino-acid polypeptide reads, in one-letter code: Ubiquinone biosynthesis O-methyltransferase (245 aa).

Arg-44, Gly-64, Asp-85, and Met-129 together coordinate S-adenosyl-L-methionine.

Belongs to the methyltransferase superfamily. UbiG/COQ3 family.

The enzyme catalyses a 3-demethylubiquinol + S-adenosyl-L-methionine = a ubiquinol + S-adenosyl-L-homocysteine + H(+). The catalysed reaction is a 3-(all-trans-polyprenyl)benzene-1,2-diol + S-adenosyl-L-methionine = a 2-methoxy-6-(all-trans-polyprenyl)phenol + S-adenosyl-L-homocysteine + H(+). The protein operates within cofactor biosynthesis; ubiquinone biosynthesis. In terms of biological role, O-methyltransferase that catalyzes the 2 O-methylation steps in the ubiquinone biosynthetic pathway. This chain is Ubiquinone biosynthesis O-methyltransferase, found in Proteus mirabilis (strain HI4320).